We begin with the raw amino-acid sequence, 418 residues long: cAMP-dependent protein kinase type II-beta regulatory subunit (418 aa).

A dimerization and phosphorylation region spans residues 2–153 (SIEIPAGLTE…RLQEACKDIL (152 aa)). The segment covering 45 to 57 (RKGTARFGHEGRT) has biased composition (basic and acidic residues). Residues 45–98 (RKGTARFGHEGRTWGDAGAAGGGGTPSKGVNFAEEPRHSDSENGEEEEEEAADA) form a disordered region. Thr-69 bears the Phosphothreonine mark. Residues Ser-83 and Ser-85 each carry the phosphoserine modification. Positions 86–96 (ENGEEEEEEAA) are enriched in acidic residues. Ser-114 carries the post-translational modification Phosphoserine. Residues 154 to 275 (LFKN…ESLP), Glu-223, Arg-232, 276 to 418 (FLKS…EPTA), Glu-352, and Arg-361 each bind 3',5'-cyclic AMP.

It belongs to the cAMP-dependent kinase regulatory chain family. In terms of assembly, the inactive form of the enzyme is composed of two regulatory chains and two catalytic chains. Activation by cAMP produces two active catalytic monomers and a regulatory dimer that binds four cAMP molecules. Interacts with PRKACA and PRKACB. Interacts with the phosphorylated form of PJA2. Forms a complex composed of PRKAR2B, GSK3B and GSKIP through GSKIP interaction; facilitates PKA-induced phosphorylation and regulates GSK3B activity. In terms of processing, phosphorylated by the activated catalytic chain. Four types of regulatory chains are found: I-alpha, I-beta, II-alpha, and II-beta. Their expression varies among tissues and is in some cases constitutive and in others inducible.

The protein resides in the cytoplasm. Its subcellular location is the cell membrane. In terms of biological role, regulatory subunit of the cAMP-dependent protein kinases involved in cAMP signaling in cells. Type II regulatory chains mediate membrane association by binding to anchoring proteins, including the MAP2 kinase. The sequence is that of cAMP-dependent protein kinase type II-beta regulatory subunit (PRKAR2B) from Bos taurus (Bovine).